The sequence spans 500 residues: Cytosol aminopeptidase (500 aa).

Mn(2+) is bound by residues K265 and D270. Residue K277 is part of the active site. Mn(2+) is bound by residues D288, D347, and E349. The active site involves R351.

The protein belongs to the peptidase M17 family. It depends on Mn(2+) as a cofactor.

The protein localises to the cytoplasm. It catalyses the reaction Release of an N-terminal amino acid, Xaa-|-Yaa-, in which Xaa is preferably Leu, but may be other amino acids including Pro although not Arg or Lys, and Yaa may be Pro. Amino acid amides and methyl esters are also readily hydrolyzed, but rates on arylamides are exceedingly low.. The catalysed reaction is Release of an N-terminal amino acid, preferentially leucine, but not glutamic or aspartic acids.. Functionally, presumably involved in the processing and regular turnover of intracellular proteins. Catalyzes the removal of unsubstituted N-terminal amino acids from various peptides. This Rickettsia prowazekii (strain Madrid E) protein is Cytosol aminopeptidase (pepA).